Here is a 64-residue protein sequence, read N- to C-terminus: Small ribosomal subunit protein bS21 (64 aa).

This sequence belongs to the bacterial ribosomal protein bS21 family.

The polypeptide is Small ribosomal subunit protein bS21 (Neorickettsia sennetsu (strain ATCC VR-367 / Miyayama) (Ehrlichia sennetsu)).